The sequence spans 413 residues: Transforming growth factor beta-2 proprotein (413 aa).

An N-terminal signal peptide occupies residues 1 to 19; it reads MHYYVLFTFLTLDLAPVAL. N-linked (GlcNAc...) asparagine glycosylation is found at Asn-72, Asn-140, and Asn-241. Intrachain disulfides connect Cys-308–Cys-317, Cys-316–Cys-379, Cys-345–Cys-410, and Cys-349–Cys-412.

This sequence belongs to the TGF-beta family. In terms of assembly, interacts with Transforming growth factor beta-2 (TGF-beta-2) chain; interaction is non-covalent and maintains (TGF-beta-2) in a latent state. As to quaternary structure, homodimer; disulfide-linked. Interacts with TGF-beta receptors (tgfbr1 and tgfbr2), leading to signal transduction. The precursor proprotein is cleaved in the Golgi apparatus to form Transforming growth factor beta-2 (TGF-beta-2) and Latency-associated peptide (LAP) chains, which remain non-covalently linked, rendering TGF-beta-2 inactive.

The protein localises to the secreted. It localises to the extracellular space. It is found in the extracellular matrix. Its function is as follows. Precursor of the Latency-associated peptide (LAP) and Transforming growth factor beta-2 (TGF-beta-2) chains, which constitute the regulatory and active subunit of TGF-beta-2, respectively. Required to maintain the Transforming growth factor beta-2 (TGF-beta-2) chain in a latent state during storage in extracellular matrix. Associates non-covalently with TGF-beta-2 and regulates its activation via interaction with 'milieu molecules', such as ltbp1 and lrrc32/garp, that control activation of TGF-beta-2. Functionally, multifunctional protein that regulates various processes such as angiogenesis and heart development. Activation into mature form follows different steps: following cleavage of the proprotein in the Golgi apparatus, Latency-associated peptide (LAP) and Transforming growth factor beta-2 (TGF-beta-2) chains remain non-covalently linked rendering TGF-beta-2 inactive during storage in extracellular matrix. At the same time, LAP chain interacts with 'milieu molecules', such as ltbp1 and lrrc32/garp, that control activation of TGF-beta-2 and maintain it in a latent state during storage in extracellular milieus. Once activated following release of LAP, TGF-beta-2 acts by binding to TGF-beta receptors (tgfbr1 and tgfbr2), which transduce signal. The sequence is that of Transforming growth factor beta-2 proprotein (tgfb2) from Xenopus laevis (African clawed frog).